A 129-amino-acid polypeptide reads, in one-letter code: Large ribosomal subunit protein uL22 (129 aa).

This sequence belongs to the universal ribosomal protein uL22 family. In terms of assembly, part of the 50S ribosomal subunit.

Functionally, this protein binds specifically to 23S rRNA; its binding is stimulated by other ribosomal proteins, e.g. L4, L17, and L20. It is important during the early stages of 50S assembly. It makes multiple contacts with different domains of the 23S rRNA in the assembled 50S subunit and ribosome. In terms of biological role, the globular domain of the protein is located near the polypeptide exit tunnel on the outside of the subunit, while an extended beta-hairpin is found that lines the wall of the exit tunnel in the center of the 70S ribosome. The chain is Large ribosomal subunit protein uL22 from Aster yellows witches'-broom phytoplasma (strain AYWB).